Consider the following 148-residue polypeptide: UPF0179 protein UNCMA_27840 (148 aa).

It belongs to the UPF0179 family.

The sequence is that of UPF0179 protein UNCMA_27840 from Methanocella arvoryzae (strain DSM 22066 / NBRC 105507 / MRE50).